A 464-amino-acid chain; its full sequence is Cysteine--tRNA ligase (464 aa).

Zn(2+) is bound at residue Cys30. The 'HIGH' region motif lies at 32 to 42 (MTVYDYCHIGH). The Zn(2+) site is built by Cys214, His239, and Glu243. The 'KMSKS' region motif lies at 271–275 (KMSKS). Lys274 is an ATP binding site.

This sequence belongs to the class-I aminoacyl-tRNA synthetase family. As to quaternary structure, monomer. It depends on Zn(2+) as a cofactor.

The protein resides in the cytoplasm. It catalyses the reaction tRNA(Cys) + L-cysteine + ATP = L-cysteinyl-tRNA(Cys) + AMP + diphosphate. This Janthinobacterium sp. (strain Marseille) (Minibacterium massiliensis) protein is Cysteine--tRNA ligase.